Consider the following 143-residue polypeptide: Hemoglobin subunit alpha (143 aa).

Residue serine 2 is modified to N-acetylserine. A Globin domain is found at 2–143 (SLSDKDKAAV…VALALAEKYR (142 aa)). Histidine 60 provides a ligand contact to O2. Residue histidine 89 participates in heme b binding.

Belongs to the globin family. In terms of assembly, heterotetramer of two alpha chains and two beta chains. In terms of tissue distribution, red blood cells.

Involved in oxygen transport from the lung to the various peripheral tissues. The chain is Hemoglobin subunit alpha (hba) from Artedidraco orianae (Barbeled plunderfish).